The sequence spans 146 residues: Hemoglobin subunit beta (146 aa).

Residue Val1 is modified to N-acetylvaline. Residues 2 to 146 form the Globin domain; the sequence is HLTAEEKSLV…VANALAHKYH (145 aa). Thr12 is subject to Phosphothreonine. Phosphoserine is present on Ser44. Lys59 carries the post-translational modification N6-acetyllysine. Residue His63 coordinates heme b. Lys82 carries the N6-acetyllysine modification. Position 92 (His92) interacts with heme b. Cys93 bears the S-nitrosocysteine mark. An N6-acetyllysine modification is found at Lys144.

Belongs to the globin family. Heterotetramer of two alpha chains and two beta chains. As to expression, red blood cells.

In terms of biological role, involved in oxygen transport from the lung to the various peripheral tissues. In Vulpes vulpes (Red fox), this protein is Hemoglobin subunit beta (HBB).